Here is a 685-residue protein sequence, read N- to C-terminus: Acetate--CoA ligase [ADP-forming] I (685 aa).

The ATP-grasp domain occupies 477-513; the sequence is LPVLEAYGIEVAPYGIARNVDEARDIAESIGYPVVLK. Residue 503-514 coordinates ATP; sequence AESIGYPVVLKV.

This sequence in the N-terminal section; belongs to the acetate CoA ligase alpha subunit family. In the C-terminal section; belongs to the acetate CoA ligase beta subunit family. As to quaternary structure, homodimer.

It catalyses the reaction acetate + ATP + CoA = acetyl-CoA + ADP + phosphate. With respect to regulation, activity requires divalent metal cations. Catalyzes the reversible formation of acetate and ATP from acetyl-CoA by using ADP and phosphate. Can use other substrates such as propionyl-CoA and butyryl-CoA, but not phenylacetyl-CoA. Seems to be involved primarily in the conversion of acetyl-CoA to acetate. Participates in the degradation of branched-chain amino acids via branched-chain-acyl-CoA esters. The sequence is that of Acetate--CoA ligase [ADP-forming] I from Archaeoglobus fulgidus (strain ATCC 49558 / DSM 4304 / JCM 9628 / NBRC 100126 / VC-16).